The primary structure comprises 315 residues: MRIALAGAGAFGEKHLDGLKNIDGVEIVSIISRKAEQAAEVAAKYGAKHSGTDLSEALARDDVDAVILCTPTQMHAEQAIACMNAGKHVQVEIPLADSWADAEAVMKKSQETGLVCMVGHTRRFNPSHQYIHNKIVAGELAIQQMDVQTYFFRRKNMNAKGEPRSWTDHLLWHHAAHTVDLFAYQAGKIVQANAVQGPIHPELGIAMDMSIQLKSETGAICTLSLSFNNDGPLGTFFRYICDNGTWIARYDDLVTGKEEPVDVSKVDVSMNGIELQDREFIAAIREGREPNSSVARVLDCYRVLGELEVQLEKQG.

The protein belongs to the Gfo/Idh/MocA family. As to quaternary structure, homodimer.

The catalysed reaction is 4-carboxy-2-hydroxymuconate semialdehyde hemiacetal + NADP(+) = 2-oxo-2H-pyran-4,6-dicarboxylate + NADPH + H(+). It participates in secondary metabolite metabolism; lignin degradation. Inhibited by p-chloromercuribenzoate (10 mM), HgCl2 (10 mM), or 5,5-dithiobis(2-nitrobenzoate) (100 mM). Involved in the degradation of protocatechuate (PCA) via the PCA 4,5-cleavage pathway. Catalyzes the oxidation of the hemiacetal form of 4-carboxy-2-hydroxymuconate-6-semialdehyde (CHMS) to produce 2-pyrone-4,6-dicarboxylate (PDC). LigC has 10-times-higher affinity to NADP than to NAD. This chain is 4-carboxy-2-hydroxymuconate-6-semialdehyde dehydrogenase (ligC), found in Sphingobium sp. (strain NBRC 103272 / SYK-6).